Reading from the N-terminus, the 384-residue chain is 8-amino-7-oxononanoate synthase (384 aa).

Residue R21 coordinates substrate. 108–109 contacts pyridoxal 5'-phosphate; sequence GF. Substrate is bound at residue H133. The pyridoxal 5'-phosphate site is built by S179, H207, and T233. An N6-(pyridoxal phosphate)lysine modification is found at K236. T352 lines the substrate pocket.

It belongs to the class-II pyridoxal-phosphate-dependent aminotransferase family. BioF subfamily. In terms of assembly, homodimer. The cofactor is pyridoxal 5'-phosphate.

It carries out the reaction 6-carboxyhexanoyl-[ACP] + L-alanine + H(+) = (8S)-8-amino-7-oxononanoate + holo-[ACP] + CO2. Its pathway is cofactor biosynthesis; biotin biosynthesis. Functionally, catalyzes the decarboxylative condensation of pimeloyl-[acyl-carrier protein] and L-alanine to produce 8-amino-7-oxononanoate (AON), [acyl-carrier protein], and carbon dioxide. The protein is 8-amino-7-oxononanoate synthase of Shigella sonnei (strain Ss046).